A 150-amino-acid chain; its full sequence is MKVIFTEDVKGRGKRGEIKNVPDGYAQNFLIPRGKAKEANKAAMSELAGQERSREKHEAEELAAAKELKKVLEDDKTVVELTGKAGTDGRMFGSVSTKQIATALEKQYQIKLDKRKMELAAPIRALGYVNVPVKLHHDVEATLRVHIAEK.

This sequence belongs to the bacterial ribosomal protein bL9 family.

Its function is as follows. Binds to the 23S rRNA. This Limosilactobacillus fermentum (strain NBRC 3956 / LMG 18251) (Lactobacillus fermentum) protein is Large ribosomal subunit protein bL9.